Here is a 488-residue protein sequence, read N- to C-terminus: Glutamyl-tRNA(Gln) amidotransferase subunit A (488 aa).

Active-site charge relay system residues include K77 and S152. Catalysis depends on S176, which acts as the Acyl-ester intermediate.

Belongs to the amidase family. GatA subfamily. In terms of assembly, heterotrimer of A, B and C subunits.

The catalysed reaction is L-glutamyl-tRNA(Gln) + L-glutamine + ATP + H2O = L-glutaminyl-tRNA(Gln) + L-glutamate + ADP + phosphate + H(+). In terms of biological role, allows the formation of correctly charged Gln-tRNA(Gln) through the transamidation of misacylated Glu-tRNA(Gln) in organisms which lack glutaminyl-tRNA synthetase. The reaction takes place in the presence of glutamine and ATP through an activated gamma-phospho-Glu-tRNA(Gln). This is Glutamyl-tRNA(Gln) amidotransferase subunit A from Streptococcus pyogenes serotype M5 (strain Manfredo).